We begin with the raw amino-acid sequence, 464 residues long: Chromosomal replication initiator protein DnaA (464 aa).

The segment at 1–82 is domain I, interacts with DnaA modulators; it reads MKNAAELWHN…GSRLDIQFIE (82 aa). The segment at 82–125 is domain II; the sequence is EEGQAKHMLDRQNEEVEVMEVAPAKTKAQKTPKSSDELVMSELG. Residues 126-342 are domain III, AAA+ region; the sequence is QLNEKYTFDT…GALTRVIAYA (217 aa). Residues Gly-170, Gly-172, Lys-173, and Thr-174 each coordinate ATP. The domain IV, binds dsDNA stretch occupies residues 343 to 464; sequence NLVGRTIDPN…EQIKHELKHS (122 aa).

This sequence belongs to the DnaA family. Oligomerizes as a right-handed, spiral filament on DNA at oriC.

The protein localises to the cytoplasm. Functionally, plays an essential role in the initiation and regulation of chromosomal replication. ATP-DnaA binds to the origin of replication (oriC) to initiate formation of the DNA replication initiation complex once per cell cycle. Binds the DnaA box (a 9 base pair repeat at the origin) and separates the double-stranded (ds)DNA. Forms a right-handed helical filament on oriC DNA; dsDNA binds to the exterior of the filament while single-stranded (ss)DNA is stabiized in the filament's interior. The ATP-DnaA-oriC complex binds and stabilizes one strand of the AT-rich DNA unwinding element (DUE), permitting loading of DNA polymerase. After initiation quickly degrades to an ADP-DnaA complex that is not apt for DNA replication. Binds acidic phospholipids. The protein is Chromosomal replication initiator protein DnaA of Exiguobacterium sibiricum (strain DSM 17290 / CCUG 55495 / CIP 109462 / JCM 13490 / 255-15).